The following is a 589-amino-acid chain: Probable 9-cis-epoxycarotenoid dioxygenase NCED5, chloroplastic (589 aa).

Residues Met-1–Ser-45 constitute a chloroplast transit peptide. Over residues Ser-21–Phe-34 the composition is skewed to low complexity. Residues Ser-21 to Asp-51 form a disordered region. Fe cation is bound by residues His-287, His-336, His-401, and His-576.

This sequence belongs to the carotenoid oxygenase family. Interacts in vitro with VAR3. Fe(2+) serves as cofactor. As to expression, detected only in seeds.

The protein resides in the plastid. It localises to the chloroplast thylakoid membrane. The enzyme catalyses a 9-cis-epoxycarotenoid + O2 = a 12'-apo-carotenal + 2-cis,4-trans-xanthoxin. It carries out the reaction 9-cis-violaxanthin + O2 = (3S,5R,6S)-5,6-epoxy-3-hydroxy-5,6-dihydro-12'-apo-beta-caroten-12'-al + 2-cis,4-trans-xanthoxin. The catalysed reaction is 9'-cis-neoxanthin + O2 = (3S,5R,6R)-3,5-dihydroxy-6,7-didehydro-5,6-dihydro-12'-apo-beta-caroten-12'-al + 2-cis,4-trans-xanthoxin. Functionally, has a 11,12(11',12') 9-cis epoxycarotenoid cleavage activity. Catalyzes the first step of abscisic-acid biosynthesis from carotenoids. This chain is Probable 9-cis-epoxycarotenoid dioxygenase NCED5, chloroplastic (NCED5), found in Arabidopsis thaliana (Mouse-ear cress).